The chain runs to 199 residues: Transgelin-2 (199 aa).

The residue at position 2 (A2) is an N-acetylalanine. S11 carries the post-translational modification Phosphoserine. Residues K17 and K20 each carry the N6-acetyllysine modification. The Calponin-homology (CH) domain maps to 24-136; it reads ADLEQILIQW…RTLMNLGGLA (113 aa). Phosphoserine is present on S163. K171 participates in a covalent cross-link: Glycyl lysine isopeptide (Lys-Gly) (interchain with G-Cter in SUMO2). One copy of the Calponin-like repeat lies at 174 to 199; sequence IGLQMGTNRGASQAGMTGYGMPRQIL. Residue T180 is modified to Phosphothreonine. R182 and R196 each carry omega-N-methylarginine.

Belongs to the calponin family. In terms of tissue distribution, expressed in epididymis (at protein level).

The sequence is that of Transgelin-2 (TAGLN2) from Homo sapiens (Human).